The chain runs to 209 residues: Uracil phosphoribosyltransferase (209 aa).

5-phospho-alpha-D-ribose 1-diphosphate contacts are provided by residues arginine 79, arginine 104, and 131–139 (DPMLATGNS). Residues isoleucine 194 and 199–201 (GDA) contribute to the uracil site. Aspartate 200 lines the 5-phospho-alpha-D-ribose 1-diphosphate pocket.

This sequence belongs to the UPRTase family. Mg(2+) serves as cofactor.

It carries out the reaction UMP + diphosphate = 5-phospho-alpha-D-ribose 1-diphosphate + uracil. It participates in pyrimidine metabolism; UMP biosynthesis via salvage pathway; UMP from uracil: step 1/1. Allosterically activated by GTP. Catalyzes the conversion of uracil and 5-phospho-alpha-D-ribose 1-diphosphate (PRPP) to UMP and diphosphate. This chain is Uracil phosphoribosyltransferase, found in Sinorhizobium fredii (strain NBRC 101917 / NGR234).